The following is a 649-amino-acid chain: MLGPESDGRRPTQGERGPGYPGEPMDKYQVLYQLNPGALGVNLVVEEMETKVKRVIKQVECMDDHQASQALEELMPLLKLRHAHISVYRELFIMWNGEISSLYLCLVMEFNKLSFQEVIEDKRKAKEIIDSKWMQNVLGQVLDALEYLHHLDIIHRNLKPSNIILVSSDHCKLQDLSSNVLMTNKAKWNIRAESTEAMYLRKSLRQSPGSLETVLKTMEEKQIPDAETFGNLLPGMLQIDPSDRTTIKDVVHITFLSGSFKSSCISLTLYRETVPASITDMLLEGNVASILEVMQNFSGWPEVQFRAMKRLLKMPADQLGLPWRPELVEVVVTTMQLHDRVLDIQLCACSLLLHLLGQAMVHHPEAKALCNQAITSAVLSALWSYPEEESLLVLVYSLLAITTTQESQSESESVSEELQNAGLLEHILEHLNSSLESRDVCVSGLGLLWALLLDGIIVNKAPLEKVPDLISQVLATYPADGEMAEASCGVFWLLSLLGCIKEQQFEQVVALLLQSIRLCQNRVLLVNNAYRGLASLVEVSELAAFKVVVQEEGGSGLSLIKETYQLHKDDPEVVENVGMLLVHLASYEEILPELVSSSMKALVQEIKERFTSSLVSDRSAFSKPGLPPGGSPQPGCTASGGLEQMIAWN.

Positions 1–13 (MLGPESDGRRPTQ) are enriched in basic and acidic residues. A disordered region spans residues 1 to 23 (MLGPESDGRRPTQGERGPGYPGE). A Protein kinase domain is found at 28–379 (YQVLYQLNPG…CNQAITSAVL (352 aa)). ATP is bound by residues 34-42 (LNPGALGVN) and Lys57. The interval 621 to 640 (FSKPGLPPGGSPQPGCTASG) is disordered.

Belongs to the protein kinase superfamily. Ser/Thr protein kinase family. STKL subfamily.

The chain is Serine/threonine kinase-like domain-containing protein STKLD1 (STKLD1) from Macaca fascicularis (Crab-eating macaque).